A 380-amino-acid chain; its full sequence is Cytochrome b (380 aa).

4 helical membrane-spanning segments follow: residues 34 to 54, 78 to 99, 114 to 134, and 179 to 199; these read FGSLLAMCLMTQIITGLLLAT, WLIRNLHANGASFFFICIYLHI, WNTGVILLLTLMATAFVGYVL, and FFALHFLLPFIIAGITIIHLA. Histidine 84 and histidine 98 together coordinate heme b. Residues histidine 183 and histidine 197 each contribute to the heme b site. A ubiquinone is bound at residue histidine 202. The next 4 membrane-spanning stretches (helical) occupy residues 227–247, 289–309, 321–341, and 348–368; these read LKDILGLALMITPLLTLALFS, LGGVLALAASVLILLLIPFLH, LSQILFWLLAANLLILTWIGS, and FIIIGQLASFSYFTTILILFP.

It belongs to the cytochrome b family. In terms of assembly, the cytochrome bc1 complex contains 11 subunits: 3 respiratory subunits (MT-CYB, CYC1 and UQCRFS1), 2 core proteins (UQCRC1 and UQCRC2) and 6 low-molecular weight proteins (UQCRH/QCR6, UQCRB/QCR7, UQCRQ/QCR8, UQCR10/QCR9, UQCR11/QCR10 and a cleavage product of UQCRFS1). This cytochrome bc1 complex then forms a dimer. Heme b is required as a cofactor.

The protein resides in the mitochondrion inner membrane. Its function is as follows. Component of the ubiquinol-cytochrome c reductase complex (complex III or cytochrome b-c1 complex) that is part of the mitochondrial respiratory chain. The b-c1 complex mediates electron transfer from ubiquinol to cytochrome c. Contributes to the generation of a proton gradient across the mitochondrial membrane that is then used for ATP synthesis. In Callipepla gambelii (Gambel's quail), this protein is Cytochrome b (MT-CYB).